Consider the following 224-residue polypeptide: Response regulator protein GraR (224 aa).

A Response regulatory domain is found at 2–115; sequence QILLVEDDNT…VLIAKLQAIY (114 aa). 4-aspartylphosphate is present on D51. Positions 126-224 form a DNA-binding region, ompR/PhoB-type; sequence KRTLSWQDAT…KVGKGYLAHE (99 aa).

Phosphorylated by GraS.

It localises to the cytoplasm. Its function is as follows. Member of the two-component regulatory system GraR/GraS involved in resistance against cationic antimicrobial peptides (CAMPs). This is Response regulator protein GraR (graR) from Staphylococcus epidermidis (strain ATCC 35984 / DSM 28319 / BCRC 17069 / CCUG 31568 / BM 3577 / RP62A).